The sequence spans 602 residues: MSIGSHSFSPGGPNGIIRSQSFAGFSGLQERRSRCNSFIENSSALKKPQAKVKKMHNLGHKNSTTPKEPQPKRMEEVYRALKNGLDEYLEVHQTELDKLTAQLKDMRRNSRLGVLYDLDKQIKAVERYMRRLEFHISKVDELYEAYCIQRRLCDGASKMKQAFAMSPASKAARESLTEINRSYKEYTENMCTIEAELENLLGEFCIKMKGLAGFARLCPGDQYEIFMRYGRQRWKLKGKIEVNGKQSWDGEEMVFLPLIVGLISIKVTEVKGLATHILVGSVTCETKDLFAARPQVVAVDINDLGTIKLNLEITWYPFDVEDLTPSTANVSKASALQRRMSMYSQGTPETPTFKDHSFFSNLPDDVFENGTAATEKRPLSFTFGDLPYEDRVPPANPAEPSSAHVSSSPDITTAATQHRALKSSESSSPDCSSSDSCGDAVPEPKDLPSPGEAVVTGNKVTPRARSEVCQKPSNAGSDRVFIEANVPVSLLQDTDEGSELKPVELDTYEGNITKQLVKRLTSAEVPGTPERLPCEGSISGESEGYKSYLDGSIEEALQGLLLALEPHKEQYKEFQDLDQEVMHLDDILKVSTFSESTTLKDI.

The disordered stretch occupies residues Lys-46–Arg-73. Over residues Pro-48–Gly-59 the composition is skewed to basic residues. Positions Asn-83 to Leu-112 form a coiled coil. A necessary for interaction with NCAM and myoblast protrusion formation region spans residues Arg-173–Leu-421. The segment at Gly-384–Asn-474 is disordered. Over residues Ala-403 to Thr-416 the composition is skewed to polar residues. Residues Ser-423–Cys-437 show a composition bias toward low complexity.

It belongs to the RIPOR family. Homooligomer; homooligomerization is regulated by RHOC and leads to the formation of concatemers through the association of N- and C-termini. Interacts with NCAM.

Its subcellular location is the cytoplasm. It is found in the cytoskeleton. The protein localises to the cell projection. It localises to the filopodium. The protein resides in the apical cell membrane. Its subcellular location is the stereocilium. It is found in the stereocilium membrane. Functionally, acts as an inhibitor of the small GTPase RHOA and plays several roles in the regulation of myoblast and hair cell differentiation, lymphocyte T proliferation and neutrophil polarization. Plays a role in fetal mononuclear myoblast differentiation by promoting filopodia and myotube formation. Maintains naive T lymphocytes in a quiescent state and prevents chemokine-induced T lymphocyte responses, such as cell adhesion, polarization and migration. Involved also in the regulation of neutrophil polarization, chemotaxis and adhesion. Required for normal development of inner and outer hair cell stereocilia within the cochlea of the inner ear. Plays a role for maintaining the structural organization of the basal domain of stereocilia. Involved in mechanosensory hair cell function. Required for normal hearing. The sequence is that of Rho family-interacting cell polarization regulator 2 from Gallus gallus (Chicken).